We begin with the raw amino-acid sequence, 492 residues long: Regulatory protein ViaA (492 aa).

The protein belongs to the ViaA family. Homodimer. Interacts with RavA.

It localises to the cytoplasm. Component of the RavA-ViaA chaperone complex, which may act on the membrane to optimize the function of some of the respiratory chains. ViaA stimulates the ATPase activity of RavA. The chain is Regulatory protein ViaA from Pectobacterium carotovorum subsp. carotovorum (strain PC1).